Consider the following 140-residue polypeptide: Nucleoside diphosphate kinase (140 aa).

Positions 11, 59, 87, 93, 104, and 114 each coordinate ATP. H117 acts as the Pros-phosphohistidine intermediate in catalysis.

This sequence belongs to the NDK family. In terms of assembly, homotetramer. Requires Mg(2+) as cofactor.

It localises to the cytoplasm. The enzyme catalyses a 2'-deoxyribonucleoside 5'-diphosphate + ATP = a 2'-deoxyribonucleoside 5'-triphosphate + ADP. It carries out the reaction a ribonucleoside 5'-diphosphate + ATP = a ribonucleoside 5'-triphosphate + ADP. Major role in the synthesis of nucleoside triphosphates other than ATP. The ATP gamma phosphate is transferred to the NDP beta phosphate via a ping-pong mechanism, using a phosphorylated active-site intermediate. This is Nucleoside diphosphate kinase from Sphingopyxis alaskensis (strain DSM 13593 / LMG 18877 / RB2256) (Sphingomonas alaskensis).